The following is a 255-amino-acid chain: MTTSSPWRATVLTLFPEMFPGPLGVSLAGRALASGLWQLEARDIRASATDRHRSVDDTPAGGGPGMVLRADVLAAAIDAAEIGQGSSKERPRLLMSPRGRPLTQARVVELARGPGPLIVCGRFEGIDQRVIDGRGLEEVSIGDYVLSGGEIAALALIDACVRLLPGVMGKEASGTEESFSDGLLEYPQYTRPQLFEGVPIPEILTSGDHAKVAAWRRAEAEALTAARRPDLWAQIPVKAPNRAGRQKTPKNKTDG.

Residues G121 and 141 to 146 (IGDYVL) each bind S-adenosyl-L-methionine. The disordered stretch occupies residues 236-255 (PVKAPNRAGRQKTPKNKTDG). Basic residues predominate over residues 244 to 255 (GRQKTPKNKTDG).

It belongs to the RNA methyltransferase TrmD family. As to quaternary structure, homodimer.

It is found in the cytoplasm. It carries out the reaction guanosine(37) in tRNA + S-adenosyl-L-methionine = N(1)-methylguanosine(37) in tRNA + S-adenosyl-L-homocysteine + H(+). Specifically methylates guanosine-37 in various tRNAs. This is tRNA (guanine-N(1)-)-methyltransferase from Bradyrhizobium diazoefficiens (strain JCM 10833 / BCRC 13528 / IAM 13628 / NBRC 14792 / USDA 110).